Here is a 70-residue protein sequence, read N- to C-terminus: Small ribosomal subunit protein bS21 (70 aa).

It belongs to the bacterial ribosomal protein bS21 family.

This chain is Small ribosomal subunit protein bS21, found in Neisseria gonorrhoeae (strain ATCC 700825 / FA 1090).